Reading from the N-terminus, the 257-residue chain is MTTLIEQLITKMGLREEPNVLEKTTELVRLLELRSTNVPLQINEYGKIVLCADLASCMIGIAFDKEQALKLSGLRKSQYLNNKRMFEKLLDLNKLASVNDICVQLGLNEVARKAEELMTLFKGVAATEDMGTDTSHPQYATMAVFQACRLLKKKVSKSKLMPFSNLRPSQFQLLEQQWERMIAKHHKESKVPSSTDMEGKLKENQNENIKGHEAKKAHKPPPEDYEIWKARMLAKAQAKLKELEASQSHMDSQLLEA.

A disordered region spans residues 186–222 (HKESKVPSSTDMEGKLKENQNENIKGHEAKKAHKPPP). A compositionally biased stretch (basic and acidic residues) spans 197 to 222 (MEGKLKENQNENIKGHEAKKAHKPPP).

The protein belongs to the ORC6 family. ORC is composed of six subunits.

Its subcellular location is the nucleus. Functionally, component of the origin recognition complex (ORC) that binds origins of replication. DNA-binding is ATP-dependent, however specific DNA sequences that define origins of replication have not been identified so far. ORC is required to assemble the pre-replication complex necessary to initiate DNA replication. The sequence is that of Origin recognition complex subunit 6 (Orc6) from Drosophila melanogaster (Fruit fly).